Reading from the N-terminus, the 298-residue chain is HTH-type transcriptional regulator ArgP (298 aa).

The HTH lysR-type domain maps to 4–60 (LDYKWIEALDAVVAQGGFERAAEELYISQSAVSQRIKQLERFLAQSVLIREQPPKPT). A DNA-binding region (H-T-H motif) is located at residues 21 to 40 (FERAAEELYISQSAVSQRIK).

It belongs to the LysR transcriptional regulatory family. Homodimer.

Controls the transcription of genes involved in arginine and lysine metabolism. In Vibrio vulnificus (strain YJ016), this protein is HTH-type transcriptional regulator ArgP.